The sequence spans 368 residues: C-glycoside deglycosidase alpha subunit (368 aa).

Glu145 is an a divalent metal cation binding site. His147 (proton acceptor) is an active-site residue. Residues Asp177, His275, and Glu311 each coordinate a divalent metal cation.

The protein belongs to the C-glycoside deglycosidase alpha subunit family. Heterodimer composed of an alpha subunit (CarB) and a beta subunit (CarC). The cofactor is a divalent metal cation.

The enzyme catalyses 3''-dehydroisovitexin = 1,5-anhydro-D-erythro-hex-1-en-3-ulose + apigenin. It carries out the reaction 3''-dehydroisoorientin = 1,5-anhydro-D-erythro-hex-1-en-3-ulose + luteolin. Carbon-carbon bond-cleaving enzyme which participates in the metabolism of C-glycosides. Acts on the C6-glycosylated compounds 3''-dehydroisovitexin (3''-oxo-isovitexin) and 3''-dehydroisoorientin (3''-oxo-homoorientin). Shows weak activity with 3'-dehydromangiferin (3'-oxo-mangiferin). The chain is C-glycoside deglycosidase alpha subunit from Microbacterium trichothecenolyticum (Aureobacterium trichothecenolyticum).